A 159-amino-acid chain; its full sequence is Nucleotide-binding protein Avin_13410 (159 aa).

Belongs to the YajQ family.

Nucleotide-binding protein. The polypeptide is Nucleotide-binding protein Avin_13410 (Azotobacter vinelandii (strain DJ / ATCC BAA-1303)).